The primary structure comprises 375 residues: ATP phosphoribosyltransferase regulatory subunit (375 aa).

The protein belongs to the class-II aminoacyl-tRNA synthetase family. HisZ subfamily. In terms of assembly, heteromultimer composed of HisG and HisZ subunits.

The protein resides in the cytoplasm. Its pathway is amino-acid biosynthesis; L-histidine biosynthesis; L-histidine from 5-phospho-alpha-D-ribose 1-diphosphate: step 1/9. Functionally, required for the first step of histidine biosynthesis. May allow the feedback regulation of ATP phosphoribosyltransferase activity by histidine. In Agrobacterium fabrum (strain C58 / ATCC 33970) (Agrobacterium tumefaciens (strain C58)), this protein is ATP phosphoribosyltransferase regulatory subunit.